Here is a 384-residue protein sequence, read N- to C-terminus: MLFSSLLVSTLVSVATAANQEVEAIQFSNLGFSGTYNQVEKLSNIYKDSCSCEVNKTPVSFSGTNAPLNEEVSVHFRGPLVLNKFASYVSDGFKYGDDSSGDWKRLSYYEGSSGTSENVTFLTSAGKNSSCLGIGLTYAGTDGISKADSSTVLAKNTLINSNDEFVIFSNISCGKSGYNNDCGVYRSDIPAYHGFYGTTKMFLFEFQMPNETHTSTDISNYNMPAIWLLNAHIPRTAQYSMNVNCSCWRSGCGEFDIFEVMNSTEYLHMYSTIHDYQGSDDIQTGMAAPAYIERDLTGTMSGGVAFDSSGNAVVWVSNSTSFDSTIQASSVNSWVKQAGADVATTLATVTGQSATTTSKKSGGVSYQPSFITNLLMTVLTLWVI.

Residues 1–17 (MLFSSLLVSTLVSVATA) form the signal peptide. Asn118, Asn128, Asn170, Asn210, and Asn244 each carry an N-linked (GlcNAc...) asparagine glycan. The ExDxxE motif motif lies at 254 to 259 (EFDIFE). N-linked (GlcNAc...) asparagine glycans are attached at residues Asn262 and Asn318. The GPI-anchor amidated serine moiety is linked to residue Ser361. A propeptide spans 362 to 384 (GGVSYQPSFITNLLMTVLTLWVI) (removed in mature form).

It belongs to the PGA52 family.

The protein localises to the cell membrane. It catalyses the reaction Hydrolysis of (1-&gt;3)-beta-D-glucosidic linkages in (1-&gt;3)-beta-D-glucans.. Its function is as follows. Probable circularly permuted 1,3-beta-glucanase involved in cell wall modification through beta-1,3-glucan network alterations such as increased branching or remodeling. The chain is Probable circularly permuted 1,3-beta-glucanase PGA52 (PGA52) from Candida albicans (strain SC5314 / ATCC MYA-2876) (Yeast).